We begin with the raw amino-acid sequence, 216 residues long: Adenylate kinase (216 aa).

Gly10–Thr15 contributes to the ATP binding site. An NMP region spans residues Ser30–Val59. Residues Thr31, Arg36, Ala57–Val59, Gly85–Arg88, and Gln92 contribute to the AMP site. An LID region spans residues Gly126–Asp163. Arg127 is a binding site for ATP. Zn(2+)-binding residues include Cys130 and Cys133. Residue Thr136 to Tyr137 coordinates ATP. The Zn(2+) site is built by Cys150 and Cys153. AMP contacts are provided by Arg160 and Arg171. Gln199 is an ATP binding site.

The protein belongs to the adenylate kinase family. Monomer.

The protein resides in the cytoplasm. The enzyme catalyses AMP + ATP = 2 ADP. It participates in purine metabolism; AMP biosynthesis via salvage pathway; AMP from ADP: step 1/1. Functionally, catalyzes the reversible transfer of the terminal phosphate group between ATP and AMP. Plays an important role in cellular energy homeostasis and in adenine nucleotide metabolism. The protein is Adenylate kinase of Bacillus cytotoxicus (strain DSM 22905 / CIP 110041 / 391-98 / NVH 391-98).